The chain runs to 103 residues: Transcriptional regulator WhiB7 (103 aa).

[4Fe-4S] cluster is bound by residues Cys-17, Cys-49, Cys-52, and Cys-58. The region spanning 25–82 (PCHVGDPDLWFAENPGDLERAKALCAGCPIRVQCLTAALERQEPWGVWGGEILDRGSI) is the 4Fe-4S Wbl-type domain. Positions 82 to 103 (IVARKRPRGRPRKDSGGNPAAA) are disordered.

Belongs to the WhiB family. The cofactor is [4Fe-4S] cluster. In terms of processing, the Fe-S cluster can be nitrosylated by nitric oxide (NO). Upon Fe-S cluster removal intramolecular disulfide bonds are formed.

It is found in the cytoplasm. In terms of biological role, acts as a transcriptional regulator. Probably redox-responsive. The apo- but not holo-form probably binds DNA. Participates in maintaining a reduced cytoplasmic (MSH/MSSM) environment under normal growth conditions and directly or indirectly controls the concentration of mycothiol (MSH + MSSM). The polypeptide is Transcriptional regulator WhiB7 (whiB7) (Mycolicibacterium smegmatis (strain ATCC 700084 / mc(2)155) (Mycobacterium smegmatis)).